The following is a 152-amino-acid chain: Protein D1 (152 aa).

This sequence belongs to the phosphatidylethanolamine-binding protein family.

The chain is Protein D1 (D1) from Onchocerca volvulus.